The chain runs to 349 residues: Anthranilate phosphoribosyltransferase (349 aa).

5-phospho-alpha-D-ribose 1-diphosphate contacts are provided by residues Gly-82, 85–86 (GD), 92–95 (NVST), 110–118 (KHGNRAVSG), and Ser-122. Gly-82 contacts anthranilate. Ser-94 serves as a coordination point for Mg(2+). Asn-113 serves as a coordination point for anthranilate. Arg-168 is a binding site for anthranilate. Mg(2+)-binding residues include Asp-227 and Glu-228.

Belongs to the anthranilate phosphoribosyltransferase family. In terms of assembly, homodimer. Mg(2+) is required as a cofactor.

The catalysed reaction is N-(5-phospho-beta-D-ribosyl)anthranilate + diphosphate = 5-phospho-alpha-D-ribose 1-diphosphate + anthranilate. It functions in the pathway amino-acid biosynthesis; L-tryptophan biosynthesis; L-tryptophan from chorismate: step 2/5. In terms of biological role, catalyzes the transfer of the phosphoribosyl group of 5-phosphorylribose-1-pyrophosphate (PRPP) to anthranilate to yield N-(5'-phosphoribosyl)-anthranilate (PRA). In Pseudomonas syringae pv. tomato (strain ATCC BAA-871 / DC3000), this protein is Anthranilate phosphoribosyltransferase.